A 532-amino-acid chain; its full sequence is Zinc finger protein ZIC 2 (532 aa).

The necessary for interaction with MDFIC and transcriptional activation or repression stretch occupies residues 100-255 (PHAAHVGSYS…YMRQQCIKQE (156 aa)). Phosphoserine occurs at positions 191 and 199. Lys253 is covalently cross-linked (Glycyl lysine isopeptide (Lys-Gly) (interchain with G-Cter in SUMO2)). The C2H2-type 1; atypical zinc finger occupies 256 to 291 (LICKWIDPEQLSNPKKSCNKTFSTMHELVTHVSVEH). The segment at 300–327 (HVCFWEECPREGKPFKAKYKLVNHIRVH) adopts a C2H2-type 2; atypical zinc-finger fold. 3 C2H2-type zinc fingers span residues 333–357 (FPCP…KRTH), 363–387 (FQCE…MHVH), and 393–415 (YLCK…MKVH). 2 disordered regions span residues 406–452 (SSLR…SSSN) and 475–532 (HRGG…EWYV). Residues 417 to 435 (SSPQGSESSPAASSGYESS) are compositionally biased toward low complexity. Residues 476–521 (RGGGSGSGGAGGGSGGGSGSGGGGGGAGGGGGGSSGGGSGTAGGHS) are compositionally biased toward gly residues. The segment covering 523–532 (LSSNFNEWYV) has biased composition (polar residues).

This sequence belongs to the GLI C2H2-type zinc-finger protein family. In terms of assembly, interacts with RNF180. Interacts (via the C2H2-type domains 3, 4 and 5) with MDFIC (via the C2H2-type domains 3, 4 and 5); the interaction reduces its transcriptional activity. Interacts with GLI1 and GLI2. Interacts (via C2H2-type domain 3) with DHX9. Phosphorylated. Post-translationally, ubiquitinated by RNF180, leading to its degradation.

Its subcellular location is the nucleus. It is found in the cytoplasm. In terms of biological role, acts as a transcriptional activator or repressor. Plays important roles in the early stage of organogenesis of the CNS. Activates the transcription of the serotonin transporter SERT in uncrossed ipsilateral retinal ganglion cells (iRGCs) to refine eye-specific projections in primary visual targets. Its transcriptional activity is repressed by MDFIC. Involved in the formation of the ipsilateral retinal projection at the optic chiasm midline. Drives the expression of EPHB1 on ipsilaterally projecting growth cones. Binds to the minimal GLI-consensus sequence 5'-TGGGTGGTC-3'. Associates to the basal SERT promoter region from ventrotemporal retinal segments of retinal embryos. The sequence is that of Zinc finger protein ZIC 2 (ZIC2) from Homo sapiens (Human).